The primary structure comprises 149 residues: DnaJ homolog subfamily C member 24 (149 aa).

The J domain occupies 11–82 (DWYSILGADP…ETKKEYDLQR (72 aa)). A DPH-type MB domain is found at 93 to 148 (VDARIYLEEMSWNEDDHSFSLSCRCGGKYSVSKDEAEEVTLISCDTCSLIIELLHY). Zn(2+)-binding residues include cysteine 115, cysteine 117, cysteine 136, and cysteine 139.

It belongs to the DPH4 family. As to quaternary structure, monomer and homooligomer. Iron binding promotes oligomerization.

The protein localises to the cytoplasm. Its subcellular location is the cytoskeleton. Its pathway is protein modification; peptidyl-diphthamide biosynthesis. Its function is as follows. Stimulates the ATPase activity of several Hsp70-type chaperones. This ability is enhanced by iron-binding. The iron-bound form is redox-active and can function as electron carrier. Plays a role in the diphthamide biosynthesis, a post-translational modification of histidine which occurs in translation elongation factor 2 (EEF2). This is DnaJ homolog subfamily C member 24 (DNAJC24) from Bos taurus (Bovine).